The following is a 205-amino-acid chain: H/ACA ribonucleoprotein complex subunit GAR1 (205 aa).

The span at 1–23 (MSFRGGNRGGRGGFRGGFRGGRT) shows a compositional bias: gly residues. The interval 1-31 (MSFRGGNRGGRGGFRGGFRGGRTGSARSFQQ) is disordered. At Arg-4 the chain carries Asymmetric dimethylarginine; by HMT1. Positions 4–21 (RGGNRGGRGGFRGGFRGG) are RGG-box 1. Position 8 is an asymmetric dimethylarginine; by HMT1; alternate (Arg-8). The residue at position 8 (Arg-8) is an Omega-N-methylarginine; by HMT1; alternate. Residue Arg-11 is modified to Asymmetric dimethylarginine; by HMT1. Arg-15 bears the Asymmetric dimethylarginine; by HMT1; alternate mark. Arg-15 is subject to Omega-N-methylarginine; by HMT1; alternate. Arg-19 bears the Asymmetric dimethylarginine; by HMT1 mark. A Glycyl lysine isopeptide (Lys-Gly) (interchain with G-Cter in ubiquitin) cross-link involves residue Lys-77. The tract at residues 124–205 (PKPKVVGPPK…SRGGFRGGRR (82 aa)) is disordered. Positions 143–205 (APGGRGGASM…SRGGFRGGRR (63 aa)) are enriched in gly residues. Asymmetric dimethylarginine; by HMT1; alternate occurs at positions 147, 154, and 158. Arg-147, Arg-154, and Arg-158 each carry omega-N-methylarginine; by HMT1; alternate. Positions 147 to 205 (RGGASMGRGGSRGGFRGGRGGSSFRGGRGGSSFRGGSRGGSFRGGSRGGSRGGFRGGRR) are RGG-box 2. Residue Arg-162 is modified to Asymmetric dimethylarginine; by HMT1. The residue at position 165 (Arg-165) is an Asymmetric dimethylarginine; by HMT1; alternate. Position 165 is an omega-N-methylarginine; by HMT1; alternate (Arg-165). Arg-171 and Arg-174 each carry asymmetric dimethylarginine; by HMT1. Omega-N-methylarginine; by HMT1 occurs at positions 180 and 184. Arg-189 carries the asymmetric dimethylarginine; by HMT1; alternate modification. Arg-189 carries the omega-N-methylarginine; by HMT1; alternate modification. 3 positions are modified to asymmetric dimethylarginine; by HMT1: Arg-193, Arg-197, and Arg-201.

It belongs to the GAR1 family. In terms of assembly, component of the small nucleolar ribonucleoprotein particles containing H/ACA-type snoRNAs (H/ACA snoRNPs). The protein component of the H/ACA snoRNP contains CBF5, GAR1, NHP2 and NOP10. The complex contains a stable core composed of CBF5 and NOP10, to which GAR1 and NHP2 subsequently bind. Interacts with snoRNAs. Post-translationally, methylated by HMT1, forming asymmetric dimethylarginines (DMA) within a domain referred to as an RGG box, made up of repeated Gly-Gly dipeptides interspersed with Arg and aromatic residues.

The protein resides in the nucleus. The protein localises to the nucleolus. Functionally, non-catalytic component of the H/ACA small nucleolar ribonucleoprotein (H/ACA snoRNP), which catalyzes pseudouridylation of rRNA and is required for ribosome biogenesis. This involves the isomerization of uridine such that the ribose is subsequently attached to C5, instead of the normal N1. Pseudouridine ('psi') residues may serve to stabilize the conformation of rRNAs. The H/ACA snoRNP complex also mediates pseudouridylation of other types of RNAs. The H/ACA snoRNP complex mediates pseudouridylation at position 93 in U2 snRNA. Essential for growth. In Saccharomyces cerevisiae (strain ATCC 204508 / S288c) (Baker's yeast), this protein is H/ACA ribonucleoprotein complex subunit GAR1.